The chain runs to 100 residues: Urease subunit gamma (100 aa).

The protein belongs to the urease gamma subunit family. As to quaternary structure, heterotrimer of UreA (gamma), UreB (beta) and UreC (alpha) subunits. Three heterotrimers associate to form the active enzyme.

Its subcellular location is the cytoplasm. It catalyses the reaction urea + 2 H2O + H(+) = hydrogencarbonate + 2 NH4(+). It participates in nitrogen metabolism; urea degradation; CO(2) and NH(3) from urea (urease route): step 1/1. In Pseudomonas aeruginosa (strain UCBPP-PA14), this protein is Urease subunit gamma.